The primary structure comprises 251 residues: Large ribosomal subunit protein uL3 (251 aa).

Gln151 carries the post-translational modification N5-methylglutamine. Residues 221–251 (GLKQAANSNDSAAADTPAEVAAVEATEGQEG) form a disordered region. The span at 225-251 (AANSNDSAAADTPAEVAAVEATEGQEG) shows a compositional bias: low complexity.

It belongs to the universal ribosomal protein uL3 family. In terms of assembly, part of the 50S ribosomal subunit. Forms a cluster with proteins L14 and L19. In terms of processing, methylated by PrmB.

Its function is as follows. One of the primary rRNA binding proteins, it binds directly near the 3'-end of the 23S rRNA, where it nucleates assembly of the 50S subunit. In Novosphingobium aromaticivorans (strain ATCC 700278 / DSM 12444 / CCUG 56034 / CIP 105152 / NBRC 16084 / F199), this protein is Large ribosomal subunit protein uL3.